Here is a 526-residue protein sequence, read N- to C-terminus: Na(+)/H(+) antiporter NhaB (526 aa).

13 helical membrane-spanning segments follow: residues 14–34 (FLGY…LINP), 35–55 (LLFY…EFIF), 99–119 (MLLV…LFVF), 122–142 (LLLR…AAAF), 146–166 (FLDA…FYGI), 206–226 (LMMH…VGEP), 239–259 (FVDF…CGIL), 307–327 (AVIG…VGLI), 328–348 (GLSV…HAIG), 357–377 (FTAL…QQLF), 397–417 (YLFN…SVYI), 451–471 (ATPN…APLI), and 479–499 (VIMA…CVEF).

The protein belongs to the NhaB Na(+)/H(+) (TC 2.A.34) antiporter family.

The protein resides in the cell inner membrane. It carries out the reaction 2 Na(+)(in) + 3 H(+)(out) = 2 Na(+)(out) + 3 H(+)(in). In terms of biological role, na(+)/H(+) antiporter that extrudes sodium in exchange for external protons. The polypeptide is Na(+)/H(+) antiporter NhaB (Pectobacterium atrosepticum (strain SCRI 1043 / ATCC BAA-672) (Erwinia carotovora subsp. atroseptica)).